Reading from the N-terminus, the 330-residue chain is Phospho-N-acetylmuramoyl-pentapeptide-transferase (330 aa).

The next 10 helical transmembrane spans lie at 3–23, 49–69, 71–91, 111–131, 145–165, 179–199, 204–224, 228–248, 256–276, and 307–327; these read SVVL…SSFI, TPTM…AVVA, PNPA…VGLY, FLLL…YVGV, VLGP…FVIV, GLAA…AFLE, LAII…YNSH, IFMG…AAIL, PVIG…VVVF, and FWIV…FFLY.

This sequence belongs to the glycosyltransferase 4 family. MraY subfamily. Mg(2+) serves as cofactor.

It is found in the cell membrane. It catalyses the reaction UDP-N-acetyl-alpha-D-muramoyl-L-alanyl-gamma-D-glutamyl-meso-2,6-diaminopimeloyl-D-alanyl-D-alanine + di-trans,octa-cis-undecaprenyl phosphate = di-trans,octa-cis-undecaprenyl diphospho-N-acetyl-alpha-D-muramoyl-L-alanyl-D-glutamyl-meso-2,6-diaminopimeloyl-D-alanyl-D-alanine + UMP. The protein operates within cell wall biogenesis; peptidoglycan biosynthesis. Its function is as follows. Catalyzes the initial step of the lipid cycle reactions in the biosynthesis of the cell wall peptidoglycan: transfers peptidoglycan precursor phospho-MurNAc-pentapeptide from UDP-MurNAc-pentapeptide onto the lipid carrier undecaprenyl phosphate, yielding undecaprenyl-pyrophosphoryl-MurNAc-pentapeptide, known as lipid I. This Rubrobacter xylanophilus (strain DSM 9941 / JCM 11954 / NBRC 16129 / PRD-1) protein is Phospho-N-acetylmuramoyl-pentapeptide-transferase.